The following is a 2025-amino-acid chain: Pericentriolar material 1 protein (2025 aa).

A disordered region spans residues 1 to 91 (MATGGGPFEE…TFPHSRYMTQ (91 aa)). An N-acetylalanine modification is found at alanine 2. The mediates interaction with DZIP1 stretch occupies residues 2–1458 (ATGGGPFEEV…TWVASNSELT (1457 aa)). Phosphoserine occurs at positions 65, 68, 69, 93, 110, 116, 119, and 159. Residues 111–140 (DLDQRSIGSDSQGRATAANNKRQLSENRKP) form a disordered region. Residues 116–132 (SIGSDSQGRATAANNKR) are compositionally biased toward polar residues. Residues 218 to 301 (KASSMREDLV…QLRALQGRQA (84 aa)) are a coiled coil. The interval 354–390 (RDSQPPAVPDNRRQAESLSLTREISQSRNPSVSEHLP) is disordered. Positions 369-385 (ESLSLTREISQSRNPSV) are enriched in polar residues. At serine 370 the chain carries Phosphoserine. At serine 372 the chain carries Phosphoserine; by PLK4. Serine 384 carries the phosphoserine modification. Residue lysine 399 is modified to N6-acetyllysine. Coiled-coil stretches lie at residues 399-426 (KMRV…QHLN) and 492-518 (AEKL…YEQT). Disordered regions lie at residues 528–553 (ENTK…VTNI) and 565–586 (VNTN…VNSN). Acidic residues predominate over residues 531-540 (KDEETEESEY). Serine 593 is subject to Phosphoserine. The tract at residues 620–654 (AHGEDEEEEVEEEGVSGASLSSRRSSLVDEAPEDE) is disordered. Positions 623–633 (EDEEEEVEEEG) are enriched in acidic residues. Residues 634 to 644 (VSGASLSSRRS) are compositionally biased toward low complexity. Serine 644 carries the post-translational modification Phosphoserine. Coiled coils occupy residues 652–772 (EDEE…PDLQ) and 822–856 (SDMR…GLAE). Threonine 857 carries the post-translational modification Phosphothreonine. Residues serine 859, serine 864, serine 867, and serine 870 each carry the phosphoserine modification. 2 disordered regions span residues 866–885 (RSDG…EKTM) and 913–940 (TDEE…NQNS). Residues 870 to 879 (SENLCTPQQS) are compositionally biased toward polar residues. Phosphothreonine is present on threonine 875. Residues serine 957, serine 974, serine 985, and serine 988 each carry the phosphoserine modification. Coiled coils occupy residues 985–1017 (SELS…CQTL) and 1061–1086 (QLTW…QNQH). 2 disordered regions span residues 1081 to 1105 (RQQN…PSSP) and 1149 to 1213 (FSQN…YDQE). The span at 1086 to 1096 (HPEKPRSKERG) shows a compositional bias: basic and acidic residues. Residues 1149 to 1169 (FSQNVSTPTEQQQPLAQNPSG) are compositionally biased toward polar residues. Residues serine 1182 and serine 1185 each carry the phosphoserine modification. A compositionally biased stretch (basic and acidic residues) spans 1189 to 1198 (EKQRNQKQPE). 5 positions are modified to phosphoserine: serine 1228, serine 1254, serine 1257, serine 1259, and serine 1260. The segment at 1230–1310 (EKATNSNRKN…STQLKSRVKN (81 aa)) is disordered. Residues 1268–1285 (TTVTKTFKTRKASAQASL) show a composition bias toward polar residues. Phosphoserine occurs at positions 1315 and 1317. The tract at residues 1319–1338 (SSTCEPCKNRNRHSAQTEEP) is disordered. Position 1466 is a phosphothreonine (threonine 1466). A phosphoserine mark is found at serine 1571, serine 1695, serine 1729, serine 1766, serine 1769, serine 1777, and serine 1783. The interval 1720 to 1943 (KRILEGDHGS…AGSPDTESPV (224 aa)) is disordered. The segment covering 1756 to 1768 (YDAKGPKNVRSDV) has biased composition (basic and acidic residues). Residues 1784–1798 (INLSKAESQALTNYG) are compositionally biased toward polar residues. The span at 1800 to 1816 (GEDENEDEEMEDFEESP) shows a compositional bias: acidic residues. Composition is skewed to polar residues over residues 1818–1828 (DIQTSLQANTE), 1849–1858 (ESTNVPSDQE), 1879–1901 (ENEQ…SSKQ), and 1925–1934 (AQETPESSLA). Phosphoserine occurs at positions 1959 and 1978.

Belongs to the PCM1 family. In terms of assembly, self-associates. Interacts with BBS4, BBS8, CETN3, HAP1, NDE1, NDEL1, MAP1LC3B, GABARAPAL2, and GABARAP. Interacts with CEP131; the interaction increases in response to ultraviolet light (UV) radiation. Associates with microtubule; association to microtubule is reduced in response to cellular stress, such as ultraviolet light (UV) radiation or heat shock, in a process that requires p38 MAP kinase signaling. Interacts with C2CD3. Interacts with CFAP263. Interacts with SSX2IP. Interacts with CCDC13. Interacts with CEP290. Interacts with PARD6A. Interacts with KIAA0753/OFIP, CEP20/FOR20 and OFD1; the interaction with CEP20/FOR20 and OFD1 may be mediated by KIAA0753/OFIP. Interacts with CCDC66. Interacts with CCDC61. Interacts with DZIP1; localizes DZIP1 and the associated BBSome to centriolar satellite. Interacts with CSTPP1, TTLL1, TPGS1 and LRRC49. Interacts with CFAP53. Post-translationally, ubiquitinated. Undergoes monoubiquitination catalyzed by the E3 ubiquitin-protein ligase MIB1 in proliferating cells, preventing cilia formation. Monoubiquitination by MIB1 is inhibited in response to cellular stress, such as ultraviolet light (UV) radiation or heat shock, resulting in cilia formation initiation. Phosphorylated on multiple serine and threonine residues by DYRK3 during the G2-to-M transition, after the nuclear-envelope breakdown. Phosphorylation by DYRK3 promotes disassembly of pericentriolar material. Phosphorylation at Ser-372 mediated by PLK4 is required to maintain the integrity of centriolar satellites. In terms of tissue distribution, expressed in the hippocampus and dentate gyrus, the columnar epithelial cells of bronchioles, the olfactory epithelium, the pericardium and the inner segment of the retina.

Its subcellular location is the cytoplasm. It is found in the cytoskeleton. It localises to the microtubule organizing center. The protein localises to the centrosome. The protein resides in the cytoplasmic granule. Its subcellular location is the centriolar satellite. It is found in the cilium basal body. Required for centrosome assembly and function. Essential for the correct localization of several centrosomal proteins including CEP250, CETN3, PCNT and NEK2. Required to anchor microtubules to the centrosome. Also involved in cilium biogenesis by recruiting the BBSome, a ciliary protein complex involved in cilium biogenesis, to the centriolar satellites. Recruits the tubulin polyglutamylase complex (TPGC) to centriolar satellites. This chain is Pericentriolar material 1 protein, found in Mus musculus (Mouse).